The chain runs to 189 residues: Elongation factor P (189 aa).

It belongs to the elongation factor P family.

The protein localises to the cytoplasm. It participates in protein biosynthesis; polypeptide chain elongation. Involved in peptide bond synthesis. Stimulates efficient translation and peptide-bond synthesis on native or reconstituted 70S ribosomes in vitro. Probably functions indirectly by altering the affinity of the ribosome for aminoacyl-tRNA, thus increasing their reactivity as acceptors for peptidyl transferase. This chain is Elongation factor P, found in Rhizobium johnstonii (strain DSM 114642 / LMG 32736 / 3841) (Rhizobium leguminosarum bv. viciae).